The primary structure comprises 822 residues: Valine--tRNA ligase (822 aa).

Residues proline 41–histidine 51 carry the 'HIGH' region motif. The 'KMSKS' region signature appears at lysine 511–serine 515. Lysine 514 contacts ATP. Residues glutamate 765 to lysine 822 adopt a coiled-coil conformation.

It belongs to the class-I aminoacyl-tRNA synthetase family. ValS type 1 subfamily. As to quaternary structure, monomer.

It is found in the cytoplasm. It carries out the reaction tRNA(Val) + L-valine + ATP = L-valyl-tRNA(Val) + AMP + diphosphate. In terms of biological role, catalyzes the attachment of valine to tRNA(Val). As ValRS can inadvertently accommodate and process structurally similar amino acids such as threonine, to avoid such errors, it has a 'posttransfer' editing activity that hydrolyzes mischarged Thr-tRNA(Val) in a tRNA-dependent manner. In Mesomycoplasma hyopneumoniae (strain 232) (Mycoplasma hyopneumoniae), this protein is Valine--tRNA ligase.